The sequence spans 506 residues: Protein CYCLOPS (506 aa).

Disordered regions lie at residues 193 to 223 (TVNS…LDNP) and 385 to 434 (KENL…RSST). Low complexity predominate over residues 202–219 (TPSQTPTFVSPSSSSTSP). Positions 385–394 (KENLKDDRKK) are enriched in basic and acidic residues. A Nuclear localization signal motif is present at residues 415-418 (KKRR). Over residues 422 to 432 (SRKMAEAKERS) the composition is skewed to basic and acidic residues. A coiled-coil region spans residues 441 to 506 (IQVVLKRCET…IERIVSDTNT (66 aa)).

Belongs to the CYCLOPS family. Highly epressed in roots. Expressed at very low levels in leaves, stems and panicles.

It localises to the nucleus. Functionally, involved in arbuscular mycorrhizal (AM) symbiosis. Required for fungal infection in roots and arbuscule development during AM symbiosis. The polypeptide is Protein CYCLOPS (Oryza sativa subsp. japonica (Rice)).